A 459-amino-acid polypeptide reads, in one-letter code: Exodeoxyribonuclease 7 large subunit (459 aa).

Belongs to the XseA family. Heterooligomer composed of large and small subunits.

Its subcellular location is the cytoplasm. It catalyses the reaction Exonucleolytic cleavage in either 5'- to 3'- or 3'- to 5'-direction to yield nucleoside 5'-phosphates.. Functionally, bidirectionally degrades single-stranded DNA into large acid-insoluble oligonucleotides, which are then degraded further into small acid-soluble oligonucleotides. The protein is Exodeoxyribonuclease 7 large subunit of Pseudomonas aeruginosa (strain UCBPP-PA14).